Consider the following 784-residue polypeptide: Lon protease (784 aa).

Residues 6 to 207 (LPLMALRDMV…TVITTLTSNI (202 aa)) form the Lon N-terminal domain. Residue 356 to 363 (GPPGVGKT) coordinates ATP. A Lon proteolytic domain is found at 592–773 (EDQIGSTTGL…DQVLKHALVE (182 aa)). Catalysis depends on residues Ser679 and Lys722.

This sequence belongs to the peptidase S16 family. As to quaternary structure, homohexamer. Organized in a ring with a central cavity.

The protein resides in the cytoplasm. It carries out the reaction Hydrolysis of proteins in presence of ATP.. In terms of biological role, ATP-dependent serine protease that mediates the selective degradation of mutant and abnormal proteins as well as certain short-lived regulatory proteins. Required for cellular homeostasis and for survival from DNA damage and developmental changes induced by stress. Degrades polypeptides processively to yield small peptide fragments that are 5 to 10 amino acids long. Binds to DNA in a double-stranded, site-specific manner. The polypeptide is Lon protease (Rickettsia prowazekii (strain Madrid E)).